We begin with the raw amino-acid sequence, 255 residues long: H-2 class II histocompatibility antigen, E-K alpha chain (255 aa).

An N-terminal signal peptide occupies residues 1-25; it reads MATIGALVLRFFFIAVLMSSQKSWA. An alpha-1 region spans residues 26–109; that stretch reads IKEEHTIIQA…ERSNNTPDAN (84 aa). At 26 to 216 the chain is on the extracellular side; it reads IKEEHTIIQA…EKTLLPETKE (191 aa). Residues 110 to 203 form an alpha-2 region; the sequence is VAPEVTVLSR…GLEEPLRKHW (94 aa). An Ig-like C1-type domain is found at 112–204; it reads PEVTVLSRSP…LEEPLRKHWE (93 aa). An intrachain disulfide couples cysteine 132 to cysteine 188. Asparagine 143 is a glycosylation site (N-linked (GlcNAc...) asparagine). The connecting peptide stretch occupies residues 204-216; sequence EFEEKTLLPETKE. The helical transmembrane segment at 217–242 threads the bilayer; that stretch reads NVVCALGLFVGLVGIVVGIILIMKGI. The Cytoplasmic portion of the chain corresponds to 243–255; the sequence is KKRNVVERRQGAL.

Belongs to the MHC class II family.

The protein resides in the membrane. This is H-2 class II histocompatibility antigen, E-K alpha chain from Mus musculus (Mouse).